Reading from the N-terminus, the 466-residue chain is Oxysterol-binding protein 4 (466 aa).

The span at 1-12 (MEIGTSSTTNNI) shows a compositional bias: polar residues. Residues 1–67 (MEIGTSSTTN…STSPPSPPIE (67 aa)) are disordered. Residues 24-45 (NNNNHNNNSSNNSSNNNSISSS) are compositionally biased toward low complexity. Over residues 46-60 (PTDSSQLMNGEQSTS) the composition is skewed to polar residues.

Belongs to the OSBP family.

In Dictyostelium discoideum (Social amoeba), this protein is Oxysterol-binding protein 4 (osbD).